We begin with the raw amino-acid sequence, 440 residues long: WAS/WASL-interacting protein family member 2 (440 aa).

Pro residues predominate over residues 1 to 18 (MPIPPPPPPPPGPPPPPT). The disordered stretch occupies residues 1-38 (MPIPPPPPPPPGPPPPPTFNQANTEQPKLSRDEQRNRG). Residues 36–53 (NRGALLQDICKGTKLKKV) enclose the WH2 domain. Arginine 37 carries the asymmetric dimethylarginine modification. Residues 49–52 (KLKK) form a binds actin region. Disordered stretches follow at residues 56 to 386 (VNDR…RDSI) and 419 to 440 (RVYP…PILR). A compositionally biased stretch (low complexity) spans 116–132 (PSSRAAAPRPPGSAASG). Composition is skewed to pro residues over residues 176–193 (APPP…PTPL), 225–236 (PAPPPVKPPPSP), 249–262 (APPP…PGVP), and 356–378 (RGKP…PPPL).

It belongs to the verprolin family. In terms of assembly, interacts with WASL and WASP, and this interaction results in cytoplasmic relocation of these two proteins along actin filaments. Interacts with NCK2 resulting in the localization to sites of focal adhesions.

The protein resides in the cytoplasm. It is found in the cytoskeleton. Plays an active role in the formation of cell surface protrusions downstream of activated PDGFB receptors. Plays an important role in actin-microspike formation through cooperation with WASL. May cooperate with WASP and WASL to induce mobilization and reorganization of the actin filament system. The chain is WAS/WASL-interacting protein family member 2 (Wipf2) from Mus musculus (Mouse).